We begin with the raw amino-acid sequence, 300 residues long: Ribosomal protein bS6--L-glutamate ligase (300 aa).

One can recognise an ATP-grasp domain in the interval 104–287 (LQLLARQGID…IAGRMIQWIE (184 aa)). ATP-binding positions include lysine 141, 178 to 179 (EY), aspartate 187, and 211 to 213 (RSN). Aspartate 248, glutamate 260, and asparagine 262 together coordinate Mg(2+). Mn(2+)-binding residues include aspartate 248, glutamate 260, and asparagine 262.

This sequence belongs to the RimK family. Mg(2+) serves as cofactor. The cofactor is Mn(2+).

In terms of biological role, an L-glutamate ligase that catalyzes the ATP-dependent post-translational addition of glutamate residues to the C-terminus of ribosomal protein bS6 (RpsF). Is also able to catalyze the synthesis of poly-alpha-glutamate in vitro, via ATP hydrolysis from unprotected glutamate as substrate. The number of glutamate residues added to either RpsF or to poly-alpha-glutamate changes with pH. This is Ribosomal protein bS6--L-glutamate ligase from Salmonella agona (strain SL483).